The sequence spans 478 residues: Vitronectin (478 aa).

Residues 1 to 19 (MAPLRPFFILALVAWVSLA) form the signal peptide. The region spanning 20–63 (DQESCKGRCTQGFMASKKCQCDELCTYYQSCCADYMEQCKPQVT) is the SMB domain. 7 cysteine pairs are disulfide-bonded: C24–C28, C24–C40, C28–C58, C38–C40, C38–C51, C44–C50, and C51–C58. Residues 64 to 66 (RGD) carry the Cell attachment site motif. A Phosphothreonine modification is found at T69. Residues Y75, Y78, and Y80 each carry the sulfotyrosine modification. The interval 82-153 (EEPKNNTNTG…QGTPEFPEEE (72 aa)) is disordered. An N-linked (GlcNAc...) asparagine glycan is attached at N86. Residues 86–99 (NNTNTGVQPENTSP) are compositionally biased toward polar residues. Positions 131–141 (EQQEEILRPDT) are enriched in basic and acidic residues. Hemopexin repeat units lie at residues 157 to 201 (GKPF…VWGI), 202 to 249 (EGPI…FSGI), and 250 to 304 (PDNV…FEHF). 2 N-linked (GlcNAc...) asparagine glycosylation sites follow: N168 and N241. Residues Y278 and Y281 each carry the sulfotyrosine modification. A disulfide bridge links C292 with C431. Phosphoserine occurs at positions 311 and 362. The interval 359–395 (LSHSAQAKKQKSKRRSRKRYRSRRGRGHRRSQSSNSR) is disordered. A compositionally biased stretch (basic residues) spans 364-389 (QAKKQKSKRRSRKRYRSRRGRGHRRS). The heparin-binding stretch occupies residues 366-399 (KKQKSKRRSRKRYRSRRGRGHRRSQSSNSRRSSR). At S398 the chain carries Phosphoserine; by PKA. Residues Y416, Y419, and Y421 each carry the sulfotyrosine modification. Residues 420–473 (DYDMDWLVPATCEPIQSVYFFSGDKYYRVNLRTRRVDSVNPPYPRSIAQYWLGC) form a Hemopexin 4 repeat.

In terms of assembly, interacts with SERPINE1/PAI1, insulin and C1QBP. In terms of processing, sulfated on tyrosine residues. Post-translationally, N- and O-glycosylated. It has been suggested that the active SMB domain may be permitted considerable disulfide bond heterogeneity or variability, thus two alternate disulfide patterns based on 3D structures are described with 1 disulfide bond conserved in both. As to expression, plasma.

It localises to the secreted. The protein resides in the extracellular space. Functionally, vitronectin is a cell adhesion and spreading factor found in serum and tissues. Vitronectin interact with glycosaminoglycans and proteoglycans. Is recognized by certain members of the integrin family and serves as a cell-to-substrate adhesion molecule. Inhibitor of the membrane-damaging effect of the terminal cytolytic complement pathway. This is Vitronectin (Vtn) from Mus musculus (Mouse).